A 500-amino-acid chain; its full sequence is Cytochrome P450 71B9 (500 aa).

The chain crosses the membrane as a helical span at residues 1-21 (MATIWFLSLLFLCCILLAAFK). Residue Cys440 coordinates heme.

The protein belongs to the cytochrome P450 family. Heme serves as cofactor.

It localises to the membrane. The protein is Cytochrome P450 71B9 (CYP71B9) of Arabidopsis thaliana (Mouse-ear cress).